The following is a 309-amino-acid chain: Homoserine kinase (309 aa).

Residue 91-101 coordinates ATP; sequence PLARGLGSSAA.

This sequence belongs to the GHMP kinase family. Homoserine kinase subfamily.

The protein resides in the cytoplasm. It carries out the reaction L-homoserine + ATP = O-phospho-L-homoserine + ADP + H(+). It participates in amino-acid biosynthesis; L-threonine biosynthesis; L-threonine from L-aspartate: step 4/5. Functionally, catalyzes the ATP-dependent phosphorylation of L-homoserine to L-homoserine phosphate. The polypeptide is Homoserine kinase (Bacillus velezensis (strain DSM 23117 / BGSC 10A6 / LMG 26770 / FZB42) (Bacillus amyloliquefaciens subsp. plantarum)).